Here is a 364-residue protein sequence, read N- to C-terminus: Protein MGF 360-18R (364 aa).

It belongs to the asfivirus MGF 360 family.

In terms of biological role, plays a role in virus cell tropism, and may be required for efficient virus replication in macrophages. In African swine fever virus (isolate Tick/South Africa/Pretoriuskop Pr4/1996) (ASFV), this protein is Protein MGF 360-18R.